Reading from the N-terminus, the 798-residue chain is MAPPSITKTATQQDVISTVDIGNSPLLSISLDQSRNFLVNGHPFLTQVPPNITTTTTSTPSPFLDFKSNKDTIANNNNTLQQQGCFVGFNTTEAKSHHVVPLGKLKGIKFTSIFRFKVWWTTHWVGTNGHELQHETQILILDKNISLGRPYVLLLPILENSFRTSLQPGLNDYVDMSVESGSTHVTGSTFKACLYLHLSNDPYRLVKEAVKVIQTKLGTFKTLEEKTPPSIIEKFGWCTWDAFYLKVHPKGVWEGVKALTDGGCPPGFVIIDDGWQSISHDDDDPVTERDGMNRTSAGEQMPCRLIKYEENYKFREYENGDNGGKKGLVGFVRDLKEEFRSVESVYVWHALCGYWGGVRPKVCGMPEAKVVVPKLSPGVKMTMEDLAVDKIVENGVGLVPPNLAQEMFDGIHSHLESAGIDGVKVDVIHLLELLSEEYGGRVELAKAYYKALTSSVNKHFKGNGVIASMEHCNDFFLLGTEAISLGRVGDDFWCCDPSGDPNGTYWLQGCHMVHCAYNSLWMGNFIHPDWDMFQSTHPCAEFHAASRAISGGPVYVSDCVGNHNFKLLKSFVLPDGSILRCQHYALPTRDCLFEDPLHNGKTMLKIWNLNKYAGVLGLFNCQGGGWCPETRRNKSASEFSHAVTCYASPEDIEWCNGKTPMDIKGVDVFAVYFFKEKKLSLMKCSDRLEVSLEPFSFELMTVSPLKVFSKRLIQFAPIGLVNMLNSGGAVQSLEFDDSASLVKIGVRGCGELSVFASEKPVCCKIDGVSVEFDYEDKMVRVQILWPGSSTLSLVEFLF.

It belongs to the glycosyl hydrolases 36 family.

It catalyses the reaction alpha-D-galactosyl-(1-&gt;3)-1D-myo-inositol + sucrose = raffinose + myo-inositol. With respect to regulation, inhibited by 1-deoxygalactonojirimycin. Not inhibited by stachyose. Strong inhibition of the hydrolytic activity by sucrose. In terms of biological role, transglycosidase operating by a ping-pong reaction mechanism. Involved in the synthesis of raffinose, a major soluble carbohydrate in seeds, roots and tubers. Able to utilize D-ononitol and D-pinitol as acceptors. May also act as a glycoside hydrolase. The chain is Galactinol--sucrose galactosyltransferase (RFS) from Pisum sativum (Garden pea).